Here is a 637-residue protein sequence, read N- to C-terminus: Threonine--tRNA ligase (637 aa).

Residues 1-61 enclose the TGS domain; it reads MIKISLKNGK…NKDCKVEILT (61 aa). The interval 242-532 is catalytic; the sequence is DHRKLGKELD…LIEHYAGAFP (291 aa). 3 residues coordinate Zn(2+): Cys-333, His-384, and His-509.

It belongs to the class-II aminoacyl-tRNA synthetase family. Homodimer. The cofactor is Zn(2+).

The protein localises to the cytoplasm. It catalyses the reaction tRNA(Thr) + L-threonine + ATP = L-threonyl-tRNA(Thr) + AMP + diphosphate + H(+). Functionally, catalyzes the attachment of threonine to tRNA(Thr) in a two-step reaction: L-threonine is first activated by ATP to form Thr-AMP and then transferred to the acceptor end of tRNA(Thr). Also edits incorrectly charged L-seryl-tRNA(Thr). This is Threonine--tRNA ligase from Clostridium kluyveri (strain NBRC 12016).